A 101-amino-acid chain; its full sequence is UPF0358 protein EF_2458 (101 aa).

It belongs to the UPF0358 family.

This is UPF0358 protein EF_2458 from Enterococcus faecalis (strain ATCC 700802 / V583).